A 624-amino-acid chain; its full sequence is uncharacterized protein (624 aa).

Positions Pro108–Tyr138 are disordered. Ser112 carries the post-translational modification Phosphoserine. Residues Glu115 to Tyr138 show a composition bias toward polar residues. Ser205 is subject to Phosphoserine. Disordered regions lie at residues Leu217–Arg236 and Lys305–Glu329.

This is an uncharacterized protein from Rattus norvegicus (Rat).